The sequence spans 356 residues: Caspase activity and apoptosis inhibitor 1 (356 aa).

Residues 1–14 (MTGKKSSREKRRKR) show a composition bias toward basic residues. Disordered regions lie at residues 1 to 24 (MTGKKSSREKRRKRSGQEAAASLA) and 54 to 80 (VAGGAERSERRKRRSTDSSSSVSGSLQ). Serine 68 is modified (phosphoserine). Threonine 69 is subject to Phosphothreonine. A Glycyl lysine isopeptide (Lys-Gly) (interchain with G-Cter in SUMO2) cross-link involves residue lysine 84. 2 positions are modified to phosphoserine: serine 100 and serine 183. The segment at 208–234 (DSTSSLRENKQPEVLESKQGKGEDSDV) is disordered. Residues 214–231 (RENKQPEVLESKQGKGED) show a composition bias toward basic and acidic residues. Positions 276–306 (ENTVQSEAGQIDDLERDIEKSVNEILGLAES) form a coiled coil. Position 307 is a phosphoserine (serine 307).

Its function is as follows. Anti-apoptotic protein that modulates a caspase-10 dependent mitochondrial caspase-3/9 feedback amplification loop. This chain is Caspase activity and apoptosis inhibitor 1 (Caap1), found in Mus musculus (Mouse).